Consider the following 491-residue polypeptide: Glutamate--tRNA ligase (491 aa).

A 'HIGH' region motif is present at residues 9 to 19 (PSPTGTPHVGL). Positions 253 to 257 (KLSKR) match the 'KMSKS' region motif. Position 256 (Lys256) interacts with ATP.

This sequence belongs to the class-I aminoacyl-tRNA synthetase family. Glutamate--tRNA ligase type 1 subfamily. In terms of assembly, monomer.

Its subcellular location is the cytoplasm. It catalyses the reaction tRNA(Glu) + L-glutamate + ATP = L-glutamyl-tRNA(Glu) + AMP + diphosphate. Functionally, catalyzes the attachment of glutamate to tRNA(Glu) in a two-step reaction: glutamate is first activated by ATP to form Glu-AMP and then transferred to the acceptor end of tRNA(Glu). In Mycolicibacterium gilvum (strain PYR-GCK) (Mycobacterium gilvum (strain PYR-GCK)), this protein is Glutamate--tRNA ligase.